A 339-amino-acid chain; its full sequence is Anthranilate phosphoribosyltransferase (339 aa).

Residues Gly79, 82 to 83 (GD), Thr87, 89 to 92 (NIST), 107 to 115 (KHGNRAVSS), and Ser119 contribute to the 5-phospho-alpha-D-ribose 1-diphosphate site. An anthranilate-binding site is contributed by Gly79. Residue Ser91 participates in Mg(2+) binding. Asn110 is an anthranilate binding site. Anthranilate is bound at residue Arg165. Positions 224 and 225 each coordinate Mg(2+).

It belongs to the anthranilate phosphoribosyltransferase family. Homodimer. Mg(2+) serves as cofactor.

It catalyses the reaction N-(5-phospho-beta-D-ribosyl)anthranilate + diphosphate = 5-phospho-alpha-D-ribose 1-diphosphate + anthranilate. Its pathway is amino-acid biosynthesis; L-tryptophan biosynthesis; L-tryptophan from chorismate: step 2/5. Functionally, catalyzes the transfer of the phosphoribosyl group of 5-phosphorylribose-1-pyrophosphate (PRPP) to anthranilate to yield N-(5'-phosphoribosyl)-anthranilate (PRA). The chain is Anthranilate phosphoribosyltransferase from Geobacillus sp. (strain WCH70).